A 206-amino-acid chain; its full sequence is Large ribosomal subunit protein uL4 (206 aa).

The disordered stretch occupies residues Gly46–Thr77. The segment covering His58–Gly70 has biased composition (basic residues).

This sequence belongs to the universal ribosomal protein uL4 family. As to quaternary structure, part of the 50S ribosomal subunit.

Its function is as follows. One of the primary rRNA binding proteins, this protein initially binds near the 5'-end of the 23S rRNA. It is important during the early stages of 50S assembly. It makes multiple contacts with different domains of the 23S rRNA in the assembled 50S subunit and ribosome. Functionally, forms part of the polypeptide exit tunnel. In Albidiferax ferrireducens (strain ATCC BAA-621 / DSM 15236 / T118) (Rhodoferax ferrireducens), this protein is Large ribosomal subunit protein uL4.